The following is a 205-amino-acid chain: dITP/XTP pyrophosphatase (205 aa).

16–21 (TGNPGK) provides a ligand contact to substrate. 2 residues coordinate Mg(2+): glutamate 48 and aspartate 77. Catalysis depends on aspartate 77, which acts as the Proton acceptor. Substrate is bound by residues serine 78, 162-165 (FGYD), lysine 185, and 190-191 (HR).

The protein belongs to the HAM1 NTPase family. Homodimer. Mg(2+) is required as a cofactor.

It catalyses the reaction XTP + H2O = XMP + diphosphate + H(+). It carries out the reaction dITP + H2O = dIMP + diphosphate + H(+). The catalysed reaction is ITP + H2O = IMP + diphosphate + H(+). Functionally, pyrophosphatase that catalyzes the hydrolysis of nucleoside triphosphates to their monophosphate derivatives, with a high preference for the non-canonical purine nucleotides XTP (xanthosine triphosphate), dITP (deoxyinosine triphosphate) and ITP. Seems to function as a house-cleaning enzyme that removes non-canonical purine nucleotides from the nucleotide pool, thus preventing their incorporation into DNA/RNA and avoiding chromosomal lesions. This is dITP/XTP pyrophosphatase from Erwinia tasmaniensis (strain DSM 17950 / CFBP 7177 / CIP 109463 / NCPPB 4357 / Et1/99).